The following is a 172-amino-acid chain: Ribosome maturation factor RimM (172 aa).

A PRC barrel domain is found at 96–168 (EGEFYYHEII…RVDVEIPEGL (73 aa)).

The protein belongs to the RimM family. In terms of assembly, binds ribosomal protein uS19.

It is found in the cytoplasm. An accessory protein needed during the final step in the assembly of 30S ribosomal subunit, possibly for assembly of the head region. Essential for efficient processing of 16S rRNA. May be needed both before and after RbfA during the maturation of 16S rRNA. It has affinity for free ribosomal 30S subunits but not for 70S ribosomes. The sequence is that of Ribosome maturation factor RimM from Streptococcus gordonii (strain Challis / ATCC 35105 / BCRC 15272 / CH1 / DL1 / V288).